We begin with the raw amino-acid sequence, 499 residues long: Bifunctional NAD(P)H-hydrate repair enzyme Nnr (499 aa).

Residues 1–217 are NAD(P)H-hydrate epimerase; it reads MFITSKEMRR…PEIAERICGP (217 aa). Residues 8–213 form the YjeF N-terminal domain; that stretch reads MRRIELNSRW…NAGIPEIAER (206 aa). The NADPHX 1; for epimerase activity stretch occupies residues 54 to 58; the sequence is GNGGD. Residues N55 and D124 each contribute to the K(+) site. Positions 128-134 are NADPHX 1; for epimerase activity; it reads GFGIRGR. D160 provides a ligand contact to (6S)-NADPHX. T163 provides a ligand contact to K(+). The YjeF C-terminal domain maps to 217–485; sequence PGDLITSDIW…EYVPKVLRNP (269 aa). Residues 217–499 form an ADP-dependent (S)-NAD(P)H-hydrate dehydratase region; the sequence is PGDLITSDIW…PEAVTEVRRD (283 aa). Residue G314 participates in (6S)-NADPHX binding. The tract at residues 360–366 is NADPHX 2; for dehydratase activity; the sequence is HAGEFRR. ADP-binding positions include 397-401 and 417-426; these read KGRVD and TPAMTVGGTG. D427 is a binding site for (6S)-NADPHX.

The protein in the N-terminal section; belongs to the NnrE/AIBP family. It in the C-terminal section; belongs to the NnrD/CARKD family. Requires K(+) as cofactor.

It carries out the reaction (6S)-NADHX + ADP = AMP + phosphate + NADH + H(+). It catalyses the reaction (6S)-NADPHX + ADP = AMP + phosphate + NADPH + H(+). The enzyme catalyses (6R)-NADHX = (6S)-NADHX. The catalysed reaction is (6R)-NADPHX = (6S)-NADPHX. In terms of biological role, bifunctional enzyme that catalyzes the epimerization of the S- and R-forms of NAD(P)HX and the dehydration of the S-form of NAD(P)HX at the expense of ADP, which is converted to AMP. This allows the repair of both epimers of NAD(P)HX, a damaged form of NAD(P)H that is a result of enzymatic or heat-dependent hydration. In Methanopyrus kandleri (strain AV19 / DSM 6324 / JCM 9639 / NBRC 100938), this protein is Bifunctional NAD(P)H-hydrate repair enzyme Nnr (nnr).